The primary structure comprises 238 residues: ATP synthase subunit a (238 aa).

7 consecutive transmembrane segments (helical) span residues 35–55, 61–81, 94–114, 128–148, 151–171, 190–210, and 211–231; these read SNVI…TLAT, VPSG…SFVV, FLCA…VPGL, ALTV…AGYI, FMGP…ISHL, IVLV…MYFL, and FSLA…IYLK.

The protein belongs to the ATPase A chain family. F-type ATPases have 2 components, CF(1) - the catalytic core - and CF(0) - the membrane proton channel. CF(1) has five subunits: alpha(3), beta(3), gamma(1), delta(1), epsilon(1). CF(0) has three main subunits: a(1), b(2) and c(9-12). The alpha and beta chains form an alternating ring which encloses part of the gamma chain. CF(1) is attached to CF(0) by a central stalk formed by the gamma and epsilon chains, while a peripheral stalk is formed by the delta and b chains.

It localises to the cell inner membrane. Functionally, key component of the proton channel; it plays a direct role in the translocation of protons across the membrane. The chain is ATP synthase subunit a from Solidesulfovibrio magneticus (strain ATCC 700980 / DSM 13731 / RS-1) (Desulfovibrio magneticus).